The primary structure comprises 697 residues: tRNA 5-methylaminomethyl-2-thiouridine biosynthesis bifunctional protein MnmC (697 aa).

The tRNA (mnm(5)s(2)U34)-methyltransferase stretch occupies residues 1–272; sequence MPKPASMAMN…KREMLTAVMS (272 aa). An FAD-dependent cmnm(5)s(2)U34 oxidoreductase region spans residues 300 to 697; it reads IGAGVAGLLT…HKHKTRQAVI (398 aa).

It in the N-terminal section; belongs to the methyltransferase superfamily. tRNA (mnm(5)s(2)U34)-methyltransferase family. In the C-terminal section; belongs to the DAO family. FAD serves as cofactor.

Its subcellular location is the cytoplasm. It catalyses the reaction 5-aminomethyl-2-thiouridine(34) in tRNA + S-adenosyl-L-methionine = 5-methylaminomethyl-2-thiouridine(34) in tRNA + S-adenosyl-L-homocysteine + H(+). Its function is as follows. Catalyzes the last two steps in the biosynthesis of 5-methylaminomethyl-2-thiouridine (mnm(5)s(2)U) at the wobble position (U34) in tRNA. Catalyzes the FAD-dependent demodification of cmnm(5)s(2)U34 to nm(5)s(2)U34, followed by the transfer of a methyl group from S-adenosyl-L-methionine to nm(5)s(2)U34, to form mnm(5)s(2)U34. In Psychrobacter cryohalolentis (strain ATCC BAA-1226 / DSM 17306 / VKM B-2378 / K5), this protein is tRNA 5-methylaminomethyl-2-thiouridine biosynthesis bifunctional protein MnmC.